The chain runs to 192 residues: Fe/S biogenesis protein NfuA (192 aa).

[4Fe-4S] cluster contacts are provided by Cys149 and Cys152.

The protein belongs to the NfuA family. Homodimer. Requires [4Fe-4S] cluster as cofactor.

In terms of biological role, involved in iron-sulfur cluster biogenesis. Binds a 4Fe-4S cluster, can transfer this cluster to apoproteins, and thereby intervenes in the maturation of Fe/S proteins. Could also act as a scaffold/chaperone for damaged Fe/S proteins. This chain is Fe/S biogenesis protein NfuA, found in Shewanella denitrificans (strain OS217 / ATCC BAA-1090 / DSM 15013).